A 289-amino-acid polypeptide reads, in one-letter code: Bis(5'-nucleosyl)-tetraphosphatase, symmetrical (289 aa).

The protein belongs to the Ap4A hydrolase family.

The catalysed reaction is P(1),P(4)-bis(5'-adenosyl) tetraphosphate + H2O = 2 ADP + 2 H(+). In terms of biological role, hydrolyzes diadenosine 5',5'''-P1,P4-tetraphosphate to yield ADP. The sequence is that of Bis(5'-nucleosyl)-tetraphosphatase, symmetrical from Yersinia pestis bv. Antiqua (strain Antiqua).